We begin with the raw amino-acid sequence, 247 residues long: Transmembrane protein 69 (247 aa).

The next 5 helical transmembrane spans lie at 97–117, 122–142, 159–179, 185–205, and 216–236; these read ALCV…VMLM, IPIL…FLGG, YLNL…FLIS, AIVT…FLLP, and IVVT…KSSF.

Its subcellular location is the membrane. This is Transmembrane protein 69 (TMEM69) from Homo sapiens (Human).